A 515-amino-acid polypeptide reads, in one-letter code: Lysine--tRNA ligase (515 aa).

Mg(2+) contacts are provided by Glu-422 and Glu-429.

It belongs to the class-II aminoacyl-tRNA synthetase family. In terms of assembly, homodimer. The cofactor is Mg(2+).

Its subcellular location is the cytoplasm. The catalysed reaction is tRNA(Lys) + L-lysine + ATP = L-lysyl-tRNA(Lys) + AMP + diphosphate. The chain is Lysine--tRNA ligase from Clostridium acetobutylicum (strain ATCC 824 / DSM 792 / JCM 1419 / IAM 19013 / LMG 5710 / NBRC 13948 / NRRL B-527 / VKM B-1787 / 2291 / W).